A 117-amino-acid chain; its full sequence is LYR motif-containing protein 1 (117 aa).

This sequence belongs to the complex I LYR family.

In Dictyostelium discoideum (Social amoeba), this protein is LYR motif-containing protein 1 (lyrm1).